Consider the following 486-residue polypeptide: Odorant receptor coreceptor (486 aa).

At Met1 to Ser47 the chain is on the cytoplasmic side. A helical transmembrane segment spans residues Val48–Ala68. The Extracellular segment spans residues Glu69–Ser75. A helical transmembrane segment spans residues Gly76–Val96. At Asn97–Leu135 the chain is on the cytoplasmic side. The helical transmembrane segment at Phe136–Phe156 threads the bilayer. Residues Gly157–His191 are Extracellular-facing. Asn169 and Asn188 each carry an N-linked (GlcNAc...) asparagine glycan. The chain crosses the membrane as a helical span at residues Gly192–His212. The Cytoplasmic segment spans residues Ser213–Leu351. Residues Val352–Ile372 form a helical membrane-spanning segment. Topologically, residues Lys373–Tyr390 are extracellular. Residues Ala391–Phe411 form a helical membrane-spanning segment. Residues Gly412–Thr462 lie on the Cytoplasmic side of the membrane. Residues Val463–Val483 form a helical membrane-spanning segment. The Extracellular segment spans residues Gln484–Lys486.

This sequence belongs to the insect chemoreceptor superfamily. Heteromeric odorant receptor channel (TC 1.A.69) family. Orco subfamily. In terms of assembly, heterodimer with conventional odorant receptors (ORs). Complexes exist early in the endomembrane system in olfactory sensory neurons (OSNs), coupling these complexes to the conserved ciliary trafficking pathway. Expression is restricted to olfactory sensory neurons (OSNs). Coexpressed with Snmp in a lateral-distal population of OSNs. Expressed in the embryonic antennal-maxillary complex, in all 21 OSNs of the larval dorsal organ, in the pupal antennal OSNs, in all 120 adult maxillary palp neurons and in approximately 70-80% of adult antennal OSNs, where expression is highest at the dorsal-medial edge. Localized to OSN cell bodies and to the distal portion of ciliated OSN dendrites.

The protein localises to the cell membrane. Functionally, odorant coreceptor which complexes with conventional odorant receptors (ORs) to form odorant-sensing units, providing sensitive and prolonged odorant signaling and calcium permeability. Orco is a universal and integral part of the functional odorant receptor, involved in the dendritic localization of other olfactory receptors. Expression of Orco alone leads to formation of rapid and transient ion channels not directly responding to odorants, but directly activated by intracellular cAMP or cGMP. Snmp, Or67d and lush act in concert to capture fatty-acid-derived male pheromone 11-cis vaccenyl acetate (cVA) molecules on the surface of Or67d expressing olfactory dendrites and facilitate their transfer to the odorant-receptor Orco complex. The polypeptide is Odorant receptor coreceptor (Orco) (Drosophila melanogaster (Fruit fly)).